The chain runs to 337 residues: Holliday junction branch migration complex subunit RuvB (337 aa).

The segment at 1-179 (MTHQVSVLHQ…FSFTGRVAYY (179 aa)) is large ATPase domain (RuvB-L). Residues leucine 18, arginine 19, glycine 60, lysine 63, threonine 64, serine 65, 126–128 (EDY), arginine 169, tyrosine 179, and arginine 216 contribute to the ATP site. A Mg(2+)-binding site is contributed by threonine 64. The interval 180–250 (SDEDLATILR…VAEKALAMLL (71 aa)) is small ATPAse domain (RuvB-S). The segment at 253–337 (EWGLNEIDIK…DNLQSLGEEK (85 aa)) is head domain (RuvB-H). DNA is bound by residues lysine 308 and arginine 313.

It belongs to the RuvB family. In terms of assembly, homohexamer. Forms an RuvA(8)-RuvB(12)-Holliday junction (HJ) complex. HJ DNA is sandwiched between 2 RuvA tetramers; dsDNA enters through RuvA and exits via RuvB. An RuvB hexamer assembles on each DNA strand where it exits the tetramer. Each RuvB hexamer is contacted by two RuvA subunits (via domain III) on 2 adjacent RuvB subunits; this complex drives branch migration. In the full resolvosome a probable DNA-RuvA(4)-RuvB(12)-RuvC(2) complex forms which resolves the HJ.

It is found in the cytoplasm. It catalyses the reaction ATP + H2O = ADP + phosphate + H(+). The RuvA-RuvB-RuvC complex processes Holliday junction (HJ) DNA during genetic recombination and DNA repair, while the RuvA-RuvB complex plays an important role in the rescue of blocked DNA replication forks via replication fork reversal (RFR). RuvA specifically binds to HJ cruciform DNA, conferring on it an open structure. The RuvB hexamer acts as an ATP-dependent pump, pulling dsDNA into and through the RuvAB complex. RuvB forms 2 homohexamers on either side of HJ DNA bound by 1 or 2 RuvA tetramers; 4 subunits per hexamer contact DNA at a time. Coordinated motions by a converter formed by DNA-disengaged RuvB subunits stimulates ATP hydrolysis and nucleotide exchange. Immobilization of the converter enables RuvB to convert the ATP-contained energy into a lever motion, pulling 2 nucleotides of DNA out of the RuvA tetramer per ATP hydrolyzed, thus driving DNA branch migration. The RuvB motors rotate together with the DNA substrate, which together with the progressing nucleotide cycle form the mechanistic basis for DNA recombination by continuous HJ branch migration. Branch migration allows RuvC to scan DNA until it finds its consensus sequence, where it cleaves and resolves cruciform DNA. This is Holliday junction branch migration complex subunit RuvB from Chlamydia abortus (strain DSM 27085 / S26/3) (Chlamydophila abortus).